The following is a 302-amino-acid chain: HTH-type transcriptional regulator AbgR (302 aa).

The 58-residue stretch at 5-62 (VKIHQIRAFVEVARQGSIRGASRMLNMSQPALSKSIQELEEGLAAQLFFRRSKGVTLT) folds into the HTH lysR-type domain. The H-T-H motif DNA-binding region spans 22 to 41 (IRGASRMLNMSQPALSKSIQ).

This sequence belongs to the LysR transcriptional regulatory family.

Its function is as follows. Could be the regulator of the abg operon. The chain is HTH-type transcriptional regulator AbgR (abgR) from Escherichia coli (strain K12).